The sequence spans 148 residues: F420H(2)-dependent quinone reductase MT1609 (148 aa).

Residues 46 to 48, 52 to 57, 68 to 71, 79 to 83, and Tyr-125 contribute to the coenzyme F420-(gamma-Glu)n site; these read AKT, RKTPLM, VASL, and VWYHN.

The protein belongs to the F420H(2)-dependent quinone reductase family.

The protein resides in the cell membrane. It carries out the reaction oxidized coenzyme F420-(gamma-L-Glu)(n) + a quinol + H(+) = reduced coenzyme F420-(gamma-L-Glu)(n) + a quinone. Involved in a F420-dependent anti-oxidant mechanism that protects M.tuberculosis against oxidative stress and bactericidal agents. Catalyzes the F420H(2)-dependent two-electron reduction of quinones to dihydroquinones, thereby preventing the formation of cytotoxic semiquinones obtained by the one-electron reduction pathway. In vitro, catalyzes the reduction of menadione to menadiol; since menaquinone is the sole quinone electron carrier in the respiratory chain in M.tuberculosis, the physiological electron acceptor for Fqr-mediated F420H(2) oxidation is therefore likely to be the endogenous menaquinone found in the membrane fraction of M.tuberculosis. This chain is F420H(2)-dependent quinone reductase MT1609, found in Mycobacterium tuberculosis (strain CDC 1551 / Oshkosh).